The chain runs to 287 residues: GPN-loop GTPase 3 (287 aa).

GTP is bound at residue 12-17 (GAGKST). The Gly-Pro-Asn (GPN)-loop; involved in dimer interface motif lies at 69 to 71 (GPN). GTP is bound at residue 172-175 (SKMD).

The protein belongs to the GPN-loop GTPase family. As to quaternary structure, heterodimers with GPN1 or GPN2. Binds to RNA polymerase II (RNAPII).

Small GTPase required for proper nuclear import of RNA polymerase II and III (RNAPII and RNAPIII). May act at an RNAP assembly step prior to nuclear import. The sequence is that of GPN-loop GTPase 3 from Cryptococcus neoformans var. neoformans serotype D (strain B-3501A) (Filobasidiella neoformans).